The chain runs to 264 residues: tRNA pseudouridine synthase A (264 aa).

Asp-56 acts as the Nucleophile in catalysis. Tyr-114 contributes to the substrate binding site.

It belongs to the tRNA pseudouridine synthase TruA family. Homodimer.

It catalyses the reaction uridine(38/39/40) in tRNA = pseudouridine(38/39/40) in tRNA. In terms of biological role, formation of pseudouridine at positions 38, 39 and 40 in the anticodon stem and loop of transfer RNAs. The protein is tRNA pseudouridine synthase A of Buchnera aphidicola subsp. Baizongia pistaciae (strain Bp).